The primary structure comprises 139 residues: Hydrogenase maturation factor HypA (139 aa).

Histidine 2 lines the Ni(2+) pocket. 4 residues coordinate Zn(2+): cysteine 73, cysteine 76, cysteine 110, and cysteine 113.

Belongs to the HypA/HybF family.

Its function is as follows. Involved in the maturation of [NiFe] hydrogenases. Required for nickel insertion into the metal center of the hydrogenase. This Pyrococcus horikoshii (strain ATCC 700860 / DSM 12428 / JCM 9974 / NBRC 100139 / OT-3) protein is Hydrogenase maturation factor HypA.